A 452-amino-acid chain; its full sequence is Lichenan permease IIC component (452 aa).

A PTS EIIC type-3 domain is found at 8–421; that stretch reads LEEKVMPIAG…AVSFVVYYPF (414 aa). Helical transmembrane passes span 31-51, 72-92, 104-124, 138-158, 187-207, 218-238, 246-266, 291-311, 351-373, and 402-422; these read GIIL…IGNL, LAYP…FGIA, LSAG…QVPF, GIPL…IAMV, FVAL…RLIV, IVSV…GGSL, LLWA…APIW, FFDI…VVTM, LLLP…MSTG, and SGAV…YPFF.

The protein localises to the cell membrane. Functionally, the phosphoenolpyruvate-dependent sugar phosphotransferase system (PTS), a major carbohydrate active -transport system, catalyzes the phosphorylation of incoming sugar substrates concomitant with their translocation across the cell membrane. This system is involved in lichenan transport. This is Lichenan permease IIC component (licC) from Bacillus subtilis (strain 168).